The sequence spans 256 residues: Phosphonates import ATP-binding protein PhnC (256 aa).

One can recognise an ABC transporter domain in the interval 5 to 253 (LRITGLVKEY…MLKTIYGGES (249 aa)). Residue 38 to 45 (GPSGTGKS) participates in ATP binding.

This sequence belongs to the ABC transporter superfamily. Phosphonates importer (TC 3.A.1.9.1) family. In terms of assembly, the complex is composed of two ATP-binding proteins (PhnC), two transmembrane proteins (PhnE) and a solute-binding protein (PhnD).

The protein localises to the cell inner membrane. It catalyses the reaction phosphonate(out) + ATP + H2O = phosphonate(in) + ADP + phosphate + H(+). In terms of biological role, part of the ABC transporter complex PhnCDE involved in phosphonates import. Responsible for energy coupling to the transport system. The protein is Phosphonates import ATP-binding protein PhnC of Bordetella parapertussis (strain 12822 / ATCC BAA-587 / NCTC 13253).